A 183-amino-acid polypeptide reads, in one-letter code: NADH-quinone oxidoreductase subunit I (183 aa).

4Fe-4S ferredoxin-type domains are found at residues 71–100 and 117–146; these read KRDE…MKAA and EIYE…LTTS. Positions 80, 83, 86, 90, 126, 129, 132, and 136 each coordinate [4Fe-4S] cluster.

Belongs to the complex I 23 kDa subunit family. NDH-1 is composed of 14 different subunits. Subunits NuoA, H, J, K, L, M, N constitute the membrane sector of the complex. The cofactor is [4Fe-4S] cluster.

The protein resides in the cell inner membrane. The enzyme catalyses a quinone + NADH + 5 H(+)(in) = a quinol + NAD(+) + 4 H(+)(out). Functionally, NDH-1 shuttles electrons from NADH, via FMN and iron-sulfur (Fe-S) centers, to quinones in the respiratory chain. The immediate electron acceptor for the enzyme in this species is believed to be ubiquinone. Couples the redox reaction to proton translocation (for every two electrons transferred, four hydrogen ions are translocated across the cytoplasmic membrane), and thus conserves the redox energy in a proton gradient. This is NADH-quinone oxidoreductase subunit I from Flavobacterium psychrophilum (strain ATCC 49511 / DSM 21280 / CIP 103535 / JIP02/86).